The primary structure comprises 237 residues: Phosphoribosylaminoimidazole-succinocarboxamide synthase (237 aa).

It belongs to the SAICAR synthetase family.

The catalysed reaction is 5-amino-1-(5-phospho-D-ribosyl)imidazole-4-carboxylate + L-aspartate + ATP = (2S)-2-[5-amino-1-(5-phospho-beta-D-ribosyl)imidazole-4-carboxamido]succinate + ADP + phosphate + 2 H(+). Its pathway is purine metabolism; IMP biosynthesis via de novo pathway; 5-amino-1-(5-phospho-D-ribosyl)imidazole-4-carboxamide from 5-amino-1-(5-phospho-D-ribosyl)imidazole-4-carboxylate: step 1/2. This is Phosphoribosylaminoimidazole-succinocarboxamide synthase from Oceanobacillus iheyensis (strain DSM 14371 / CIP 107618 / JCM 11309 / KCTC 3954 / HTE831).